Consider the following 592-residue polypeptide: Protein phosphatase EYA1 (592 aa).

Disordered regions lie at residues 1 to 95 and 240 to 320; these read MEMQ…RPYP and MTSS…PDSD. Residues 8–26 show a composition bias toward low complexity; it reads SPHSRLSGSSESPSGPKLG. A compositionally biased stretch (polar residues) spans 28-63; that stretch reads SHINSNSMTPNGTEVKTEPMSSSETASTTADGSLNN. Composition is skewed to low complexity over residues 64–75 and 241–253; these read FSGSAIGSSSFS and TSSNTSPTTPSTN. Residues 254–287 show a composition bias toward polar residues; it reads ATYQLQEPPSGITSQAVTDPTAEYSTIHSPSTPI. Basic and acidic residues predominate over residues 288-303; it reads KDSDSDRLRRGSDGKS. Asp328 functions as the Nucleophile in the catalytic mechanism. Asp328, Asp330, and Asp556 together coordinate Mg(2+). Asp330 serves as the catalytic Proton donor.

This sequence belongs to the HAD-like hydrolase superfamily. EYA family. In terms of assembly, probably interacts with SIX2, SIX4 and SIX5. Interacts with H2AX in response to DNA damage. Interacts with SIX3; promotes EYA1 translocation to the nucleus. Requires Mg(2+) as cofactor. In terms of processing, sumoylated with SUMO1. In terms of tissue distribution, in the embryo, highly expressed in kidney with lower levels in brain. Weakly expressed in lung. In the adult, highly expressed in heart and skeletal muscle. Weakly expressed in brain and liver. No expression in eye or kidney.

The protein localises to the cytoplasm. The protein resides in the nucleus. It catalyses the reaction O-phospho-L-tyrosyl-[protein] + H2O = L-tyrosyl-[protein] + phosphate. It carries out the reaction O-phospho-L-seryl-[protein] + H2O = L-seryl-[protein] + phosphate. The enzyme catalyses O-phospho-L-threonyl-[protein] + H2O = L-threonyl-[protein] + phosphate. Functionally, functions both as protein phosphatase and as transcriptional coactivator for SIX1, and probably also for SIX2, SIX4 and SIX5. Tyrosine phosphatase that dephosphorylates 'Tyr-142' of histone H2AX (H2AXY142ph) and promotes efficient DNA repair via the recruitment of DNA repair complexes containing MDC1. 'Tyr-142' phosphorylation of histone H2AX plays a central role in DNA repair and acts as a mark that distinguishes between apoptotic and repair responses to genotoxic stress. Its function as histone phosphatase may contribute to its function in transcription regulation during organogenesis. Also has phosphatase activity with proteins phosphorylated on Ser and Thr residues (in vitro). Required for normal embryonic development of the craniofacial and trunk skeleton, kidneys and ears. Together with SIX1, it plays an important role in hypaxial muscle development; in this it is functionally redundant with EYA2. The protein is Protein phosphatase EYA1 (EYA1) of Homo sapiens (Human).